A 433-amino-acid polypeptide reads, in one-letter code: Adenylosuccinate synthetase (433 aa).

Residues 13 to 19 (GDEGKGK) and 41 to 43 (GHT) contribute to the GTP site. Asp14 (proton acceptor) is an active-site residue. Mg(2+) is bound by residues Asp14 and Gly41. IMP contacts are provided by residues 14-17 (DEGK), 39-42 (NAGH), Thr130, Arg144, Gln225, Thr240, and Arg304. The Proton donor role is filled by His42. 300-306 (STTGRKR) contacts substrate. GTP-binding positions include Arg306, 332–334 (KLD), and 414–416 (STG).

This sequence belongs to the adenylosuccinate synthetase family. As to quaternary structure, homodimer. The cofactor is Mg(2+).

The protein localises to the cytoplasm. It catalyses the reaction IMP + L-aspartate + GTP = N(6)-(1,2-dicarboxyethyl)-AMP + GDP + phosphate + 2 H(+). It functions in the pathway purine metabolism; AMP biosynthesis via de novo pathway; AMP from IMP: step 1/2. Its function is as follows. Plays an important role in the de novo pathway of purine nucleotide biosynthesis. Catalyzes the first committed step in the biosynthesis of AMP from IMP. The chain is Adenylosuccinate synthetase from Buchnera aphidicola subsp. Acyrthosiphon pisum (strain APS) (Acyrthosiphon pisum symbiotic bacterium).